The following is a 331-amino-acid chain: Septin homolog spn2 (331 aa).

Positions 29 to 301 (RGFQFNVMVV…EKFRFKQLSS (273 aa)) constitute a Septin-type G domain. The G1 motif stretch occupies residues 39–46 (GPSGSGKS). GTP-binding positions include 39–46 (GPSGSGKS), T73, G99, 179–187 (KSDSLTLEE), G235, and R250. A G3 motif region spans residues 96 to 99 (DTPG). The segment at 178–181 (AKSD) is G4 motif. Residues 311–331 (RMGSPAPVYPSEPHLHTATAQ) form a disordered region.

Belongs to the TRAFAC class TrmE-Era-EngA-EngB-Septin-like GTPase superfamily. Septin GTPase family. In terms of assembly, component of the septin complex composed of two copies of each spn1, spn2, spn3 and spn4. Component of the sporulation-specific septin complex composed of at least spn2, spn5, spn6 and spn7.

The protein resides in the cytoplasm. It localises to the cell cortex. It is found in the forespore membrane. Functionally, plays a role in the cell cycle. Involved in a late stage of septum formation leading to the separation of the daughter cells. Involved in the correct orientation of forespore membrane extension during sporulation. Binds phosphatidylinositol 4-phosphate. The sequence is that of Septin homolog spn2 (spn2) from Schizosaccharomyces pombe (strain 972 / ATCC 24843) (Fission yeast).